The sequence spans 525 residues: Sensory neuron membrane protein 1 (525 aa).

Residues 1 to 11 (MLLPKPLKYAA) lie on the Cytoplasmic side of the membrane. A helical transmembrane segment spans residues 12-32 (IGGGVFVFGILIGWVIFPVIL). The Extracellular portion of the chain corresponds to 33–456 (KSQIKKEMAL…LKHQLFIPKR (424 aa)). N-linked (GlcNAc...) asparagine glycans are attached at residues N67, N105, and N229. 3 cysteine pairs are disulfide-bonded: C268–C333, C297–C352, and C335–C341. N440 carries N-linked (GlcNAc...) asparagine glycosylation. A helical transmembrane segment spans residues 457-477 (IVGVIRWWMVSFGLIAVLAGV). The Cytoplasmic portion of the chain corresponds to 478–525 (MYHFKDNIMGWAAKGESTTAKVNPEDGSNEQRGVSVIGQDREPPKVTM). The segment at 496–525 (TAKVNPEDGSNEQRGVSVIGQDREPPKVTM) is disordered. Positions 516–525 (QDREPPKVTM) are enriched in basic and acidic residues.

It belongs to the CD36 family. In terms of tissue distribution, principal component of the olfactory cilia membrane. Localizes to the somata, dendritic neck and cilia of the olfactory neurons (at protein level). Not detected in the axons of ORNs, the cytoplasm of auxiliary cells or non-sensory structures. Expression is universal among ORNs but differential between neuron and sensillum types.

Its subcellular location is the cell membrane. Plays an olfactory role that is not restricted to pheromone sensitivity. May be involved in the odor detection properties of the olfactory receptor neurons (ORNs) rather than their differentiation and growth. The chain is Sensory neuron membrane protein 1 from Antheraea polyphemus (Polyphemus moth).